Reading from the N-terminus, the 187-residue chain is Protein McbG (187 aa).

This sequence belongs to the pentapeptide repeat protein family.

Together with proteins McbE and McbF this protein causes immunity to the peptide antibiotic microcin B17 (MccB17), which inhibits DNA replication in Enterobacteriaceae by induction of the SOS repair system. McbG alone can provide some protection. The polypeptide is Protein McbG (mcbG) (Escherichia coli).